Consider the following 1430-residue polypeptide: FYVE, RhoGEF and PH domain-containing protein 6 (1430 aa).

Residues 1–36 (MTSAAEIKKPPVAPKPKFVVANNKPAPPPIAPKPDI) form a disordered region. Positions 15–24 (KPKFVVANNK) are enriched in low complexity. Ser231 bears the Phosphoserine mark. The segment at 330-351 (CVDTPSESTEEPGNSDSSSSCL) is disordered. The span at 334–351 (PSESTEEPGNSDSSSSCL) shows a compositional bias: polar residues. Ser515 is modified (phosphoserine). Residues 516-538 (EELLEKSSYPSSEEKSSEKSLER) are disordered. Basic and acidic residues predominate over residues 527–538 (SEEKSSEKSLER). Phosphoserine occurs at positions 554, 605, 692, and 721. Disordered regions lie at residues 695-739 (NYSL…PYKS) and 800-869 (PDGQ…NGMK). The segment covering 728–739 (SRESSSQAPYKS) has biased composition (polar residues). Residues 831–847 (PSDEEEIINSSDEDDVS) show a composition bias toward acidic residues. The segment covering 851–868 (SKGEPDPLEDKQDEDNGM) has biased composition (basic and acidic residues). The DH domain occupies 871–1060 (KVHHIAKEIM…IEVANHANDT (190 aa)). A PH 1 domain is found at 1089-1183 (VFLKEGILMK…WLEAISRAIE (95 aa)). At Ser1197 the chain carries Phosphoserine. The FYVE-type zinc-finger motif lies at 1222–1281 (DTRATMCMICTSEFTLTWRRHHCRACGKIVCQACSSNKYGLDYLKNQPARVCEHCFQELQ). Positions 1228, 1231, 1244, 1247, 1252, 1255, 1273, and 1276 each coordinate Zn(2+). Positions 1333 to 1429 (DSSMSGYLYR…WIEAFQEGTI (97 aa)) constitute a PH 2 domain.

Its subcellular location is the cytoplasm. The protein resides in the cytoskeleton. Functionally, may activate CDC42, a member of the Ras-like family of Rho- and Rac proteins, by exchanging bound GDP for free GTP. May play a role in regulating the actin cytoskeleton and cell shape. In Homo sapiens (Human), this protein is FYVE, RhoGEF and PH domain-containing protein 6 (FGD6).